Here is a 356-residue protein sequence, read N- to C-terminus: Histidinol-phosphate aminotransferase (356 aa).

K214 is modified (N6-(pyridoxal phosphate)lysine).

It belongs to the class-II pyridoxal-phosphate-dependent aminotransferase family. Histidinol-phosphate aminotransferase subfamily. In terms of assembly, homodimer. Pyridoxal 5'-phosphate serves as cofactor.

It catalyses the reaction L-histidinol phosphate + 2-oxoglutarate = 3-(imidazol-4-yl)-2-oxopropyl phosphate + L-glutamate. It participates in amino-acid biosynthesis; L-histidine biosynthesis; L-histidine from 5-phospho-alpha-D-ribose 1-diphosphate: step 7/9. This Shigella boydii serotype 4 (strain Sb227) protein is Histidinol-phosphate aminotransferase.